The sequence spans 493 residues: Tripartite motif-containing protein 5 (493 aa).

An N-acetylalanine modification is found at A2. The RING-type zinc finger occupies 15–59 (CPICLELLTQPLSLDCGHSFCQACLTANHKKSTLDKGERSCPVCR). At S86 the chain carries Phosphoserine. The B box-type zinc finger occupies 90-132 (QKVDHCARHGEKLLLFCKEDGKVICWLCERSQEHRGHHTFLTE). The Zn(2+) site is built by C95, H98, C117, and H123. Residues 131–223 (TEEVAQKYQV…LTKSETEMVQ (93 aa)) adopt a coiled-coil conformation. The segment at 185–198 (FEQLRDILDWEESN) is required for interaction with GABARAP and for autophagy. Positions 281-493 (LKGMLEVFRE…VPMTLCSPSS (213 aa)) constitute a B30.2/SPRY domain.

Belongs to the TRIM/RBCC family. As to quaternary structure, can form homodimers and homotrimers. In addition to lower-order dimerization, also exhibits a higher-order multimerization and both low- and high-order multimerizations are essential for its restriction activity. Interacts with BTBD1 and BTBD2. Interacts with PSMC4, PSMC5, PSMD7 and HSPA8/HSC70. Interacts (via B30.2/SPRY domain) with HSPA1A/B. Interacts with PSMC2, MAP3K7/TAK1, TAB2 and TAB3. Interacts with SQSTM1. Interacts with TRIM6 and TRIM34. Interacts with ULK1 (phosphorylated form), GABARAP, GABARAPL1, GABARAPL2, MAP1LC3A, MAP1LC3C and BECN1. Post-translationally, degraded in a proteasome-independent fashion in the absence of viral infection but in a proteasome-dependent fashion following exposure to restriction sensitive virus. Autoubiquitinated in a RING finger- and UBE2D2-dependent manner. Monoubiquitinated by TRIM21. Deubiquitinated by Yersinia YopJ. Ubiquitination may not lead to proteasomal degradation.

It localises to the cytoplasm. The protein localises to the nucleus. It catalyses the reaction S-ubiquitinyl-[E2 ubiquitin-conjugating enzyme]-L-cysteine + [acceptor protein]-L-lysine = [E2 ubiquitin-conjugating enzyme]-L-cysteine + N(6)-ubiquitinyl-[acceptor protein]-L-lysine.. The protein operates within protein modification; protein ubiquitination. In terms of biological role, capsid-specific restriction factor that prevents infection from non-host-adapted retroviruses. Blocks viral replication early in the life cycle, after viral entry but before reverse transcription. In addition to acting as a capsid-specific restriction factor, also acts as a pattern recognition receptor that activates innate immune signaling in response to the retroviral capsid lattice. Binding to the viral capsid triggers its E3 ubiquitin ligase activity, and in concert with the heterodimeric ubiquitin conjugating enzyme complex UBE2V1-UBE2N (also known as UBC13-UEV1A complex) generates 'Lys-63'-linked polyubiquitin chains, which in turn are catalysts in the autophosphorylation of the MAP3K7/TAK1 complex (includes TAK1, TAB2, and TAB3). Activation of the MAP3K7/TAK1 complex by autophosphorylation results in the induction and expression of NF-kappa-B and MAPK-responsive inflammatory genes, thereby leading to an innate immune response in the infected cell. Plays a role in regulating autophagy through activation of autophagy regulator BECN1 by causing its dissociation from its inhibitors BCL2 and TAB2. The protein is Tripartite motif-containing protein 5 (TRIM5) of Pongo abelii (Sumatran orangutan).